A 336-amino-acid chain; its full sequence is tRNA N6-adenosine threonylcarbamoyltransferase (336 aa).

Fe cation contacts are provided by H112 and H116. Residues 136–140 (LVSGG), D169, G182, and N276 each bind substrate. Position 304 (D304) interacts with Fe cation.

The protein belongs to the KAE1 / TsaD family. Requires Fe(2+) as cofactor.

Its subcellular location is the cytoplasm. The enzyme catalyses L-threonylcarbamoyladenylate + adenosine(37) in tRNA = N(6)-L-threonylcarbamoyladenosine(37) in tRNA + AMP + H(+). Functionally, required for the formation of a threonylcarbamoyl group on adenosine at position 37 (t(6)A37) in tRNAs that read codons beginning with adenine. Is involved in the transfer of the threonylcarbamoyl moiety of threonylcarbamoyl-AMP (TC-AMP) to the N6 group of A37, together with TsaE and TsaB. TsaD likely plays a direct catalytic role in this reaction. The sequence is that of tRNA N6-adenosine threonylcarbamoyltransferase from Francisella tularensis subsp. holarctica (strain FTNF002-00 / FTA).